Consider the following 447-residue polypeptide: Tektin-4 (447 aa).

2 coiled-coil regions span residues 322–348 and 375–423; these read LRKTLTEITDQEHQIAALKQAIKDKEA and FRLL…TNSL.

The protein belongs to the tektin family. As to quaternary structure, microtubule inner protein component of sperm flagellar doublet microtubules. Ubiquitinated, leading to its degradation. Deubiquitinated by USP16, promoting its stability. In terms of tissue distribution, detected in testis, where it is weakly expressed in round spermatids, and strongly expressed in the flagellum of step 16 elongated spermatids (at protein level). Expressed in spermatozoa. In the sperm flagellum, localizes to the principal piece and midpiece (at protein level). Specifically expressed in testis; not detected in other tissues tested.

Its subcellular location is the cytoplasm. It localises to the cytoskeleton. The protein resides in the cilium axoneme. It is found in the flagellum axoneme. Functionally, microtubule inner protein (MIP) part of the dynein-decorated doublet microtubules (DMTs) in cilia and flagellar axoneme. Forms filamentous polymers in the walls of ciliary and flagellar microtubules. Contributes to normal sperm motility. The protein is Tektin-4 (Tekt4) of Mus musculus (Mouse).